The chain runs to 490 residues: Apocarotenoid-15,15'-oxygenase (490 aa).

H183 contributes to the Fe cation binding site. S206 is a binding site for substrate. H238 is a binding site for Fe cation. F303 is a binding site for substrate. Fe cation contacts are provided by H304 and H484.

The protein belongs to the carotenoid oxygenase family. Fe(2+) is required as a cofactor.

It carries out the reaction all-trans-8'-apo-beta-carotenal + O2 = (2E,4E,6E)-2,6-dimethylocta-2,4,6-trienedial + all-trans-retinal. Functionally, cleaves a number of carotenals and carotenols in the all-trans configuration at the 15-15' double bond producing retinal or retinol, respectively. Also shows activity toward lycopenals and the corresponding alcohols. Does not cleave beta-carotene or lycopene. This is Apocarotenoid-15,15'-oxygenase from Synechocystis sp. (strain ATCC 27184 / PCC 6803 / Kazusa).